The chain runs to 276 residues: Aurora kinase C (276 aa).

Residues 16-266 (FEIGRPLGRG…LAQVLKHPWV (251 aa)) enclose the Protein kinase domain. Residues 22–30 (LGRGKFGRV) and Lys45 each bind ATP. Asp139 acts as the Proton acceptor in catalysis. Position 171 is a phosphothreonine; by PKA (Thr171).

Belongs to the protein kinase superfamily. Ser/Thr protein kinase family. Aurora subfamily. In terms of assembly, component of the chromosomal passenger complex (CPC) composed of at least BIRC5/survivin, CDCA8/borealin, INCENP, AURKB or AURKC; predominantly independent AURKB- and AURKC-containing complexes exist; in the complex interacts directly with BIRC5/survivin and INCENP. Interacts with TACC1. As to expression, expressed only in testis.

The protein resides in the nucleus. It localises to the chromosome. Its subcellular location is the centromere. The protein localises to the cytoplasm. It is found in the cytoskeleton. The protein resides in the spindle. The catalysed reaction is L-seryl-[protein] + ATP = O-phospho-L-seryl-[protein] + ADP + H(+). It carries out the reaction L-threonyl-[protein] + ATP = O-phospho-L-threonyl-[protein] + ADP + H(+). Okadaic acid, an inhibitor of protein phosphatase 1 (PP1), protein phosphatase 2A (PP2A) and protein phosphatase 5 (PP5), increases AURKC activity. AURKC is also stabilized through its interaction with INCENP, which also acts as an activator. Serine/threonine-protein kinase component of the chromosomal passenger complex (CPC), a complex that acts as a key regulator of mitosis. The CPC complex has essential functions at the centromere in ensuring correct chromosome alignment and segregation and is required for chromatin-induced microtubule stabilization and spindle assembly. Also plays a role in meiosis and more particularly in spermatogenesis. Has redundant cellular functions with AURKB and can rescue an AURKB knockdown. Like AURKB, AURKC phosphorylates histone H3 at 'Ser-10' and 'Ser-28'. AURKC phosphorylates the CPC complex subunits BIRC5/survivin and INCENP leading to increased AURKC activity. Phosphorylates TACC1, another protein involved in cell division, at 'Ser-228'. This chain is Aurora kinase C (Aurkc), found in Mus musculus (Mouse).